The chain runs to 235 residues: (5-formylfuran-3-yl)methyl phosphate synthase (235 aa).

Lys-27 acts as the Schiff-base intermediate with substrate in catalysis. Lys-86 acts as the Proton acceptor in catalysis.

It belongs to the MfnB family.

It catalyses the reaction 2 D-glyceraldehyde 3-phosphate = 4-(hydroxymethyl)-2-furancarboxaldehyde phosphate + phosphate + 2 H2O. It participates in cofactor biosynthesis; methanofuran biosynthesis. In terms of biological role, catalyzes the formation of 4-(hydroxymethyl)-2-furancarboxaldehyde phosphate (4-HFC-P) from two molecules of glyceraldehyde-3-P (GA-3-P). This Archaeoglobus fulgidus (strain ATCC 49558 / DSM 4304 / JCM 9628 / NBRC 100126 / VC-16) protein is (5-formylfuran-3-yl)methyl phosphate synthase.